A 1088-amino-acid polypeptide reads, in one-letter code: MGKYNLILSEYLSFIYNSQSAVQIPIYYSSNSELENRCIEFHSKCLENSKNGLPLKKLFVEYSDVIENATLLSILSYSYDKYNAVERKLVKYAKGKPLEADLTVNELDYENNKITSELFPTAEEYTDSLMDPAILTSLSSNLNAVMFWLEKHENDAAEKLKIYKRRLDLFTIVASTVNKYGVPRHNEKYRYEYEVMKDKPYYLVTWANSSIEMLMSVFSHEDYLIARELIVLSYSNRSTLAKLVSSPMSILVALVDINGTFITNEELELEFSNKYVRAIVPDQTFDELKQMLDNMRKAGLTDIPKMIQDWLADCSIEKFPLMAKIYSWSFHVGFRKQKMLDAALDQLKTEYTEDIDDEMYREYTMLIRDEVVKMLKEPVKHDDHLLQDSELAGLLSMSSASNGESRQLKFGRKTIFSTKKNMHVMDDMANGRYTPGIIPPVNVDKPIPLGRRDVPGRRTRIIFILPYEYFIAQHAVVEKMLIYAKHTREYAEFYSQSNQLLSYGDVTRFLSNNSMVLYTDVSQWDSSQHNTQPFRKGIIMGLDMLANMTNDARVIQTLNLYKQTQINLMDSYVQIPDGDVIKKIQYGAVASGEKQTKAANSIANLALIKTVLSRISNKYSFATKIIRVDGDDNYAVLQFNTEVTKQMVQDVSNDVRETYARMNAKVKALVSTVGIEIAKRYIAGGKIFFRAGINLLNNEKRGQSTQWDQAAVLYSNYIVNRLRGFETDREFILTKIMQMTSVAITGSLRLFPSERVLTTNSTFKVFDSEDFIIEYGTTDDEVYIQRAFMSLSSQKSGIADEIAASSTFKNYVSRLSEQLLFSKNNIVSKGIALTEKAKLNSYAPISLEKRRAQISALLTMLQKPVTFKSSKITINDILRDIKPFFTVSEAHLPIQYQKFMPTLPDNVQYIIQCIGSRTYQIEDDGSKSAISRLISKYSVYKPSIEELYKVISLHENEIQLYLISLGIPKIDADTYVGSKIYSQDKYRILESYVYNLLSINYGCYQLFDFNSPDLEKLIRIPFKGKIPAVTFILHLYAKLEVINHAIKNGSWISLFCNYPKSEMIKLWKKMWNITSLRSPYTNANFFQD.

The RdRp catalytic domain occupies 501 to 687 (LSYGDVTRFL…AKRYIAGGKI (187 aa)).

This sequence belongs to the reoviridae RNA-directed RNA polymerase family. Interacts with VP3 (Potential). Interacts with VP2; this interaction activates VP1. Interacts with NSP5; this interaction is probably necessary for the formation of functional virus factories. Interacts with NSP2; this interaction is weak. Mg(2+) is required as a cofactor.

The protein localises to the virion. It carries out the reaction RNA(n) + a ribonucleoside 5'-triphosphate = RNA(n+1) + diphosphate. In terms of biological role, RNA-directed RNA polymerase that is involved in both transcription and genome replication. Together with VP3 capping enzyme, forms an enzyme complex positioned near the channels situated at each of the five-fold vertices of the core. Following infection, the outermost layer of the virus is lost, leaving a double-layered particle (DLP) made up of the core and VP6 shell. VP1 then catalyzes the transcription of fully conservative plus-strand genomic RNAs that are extruded through the DLP's channels into the cytoplasm where they function as mRNAs for translation of viral proteins. One copy of each of the viral (+)RNAs is also recruited during core assembly, together with newly synthesized polymerase complexes and VP2. The polymerase of these novo-formed particles catalyzes the synthesis of complementary minus-strands leading to dsRNA formation. To do so, the polymerase specifically recognizes and binds 4 bases 5'-UGUG-3' in the conserved 3'-sequence of plus-strand RNA templates. VP2 presumably activates the autoinhibited VP1-RNA complex to coordinate packaging and genome replication. Once dsRNA synthesis is complete, the polymerase switches to the transcriptional mode, thus providing secondary transcription. This Bos taurus (Bovine) protein is RNA-directed RNA polymerase.